Consider the following 331-residue polypeptide: Holliday junction branch migration complex subunit RuvB (331 aa).

A large ATPase domain (RuvB-L) region spans residues 1–186 (MAKTMMQDRL…FGIVQRLEFY (186 aa)). Residues I25, R26, G67, K70, T71, T72, 133 to 135 (EDF), R176, Y186, and R223 each bind ATP. T71 serves as a coordination point for Mg(2+). The small ATPAse domain (RuvB-S) stretch occupies residues 187–257 (NIADLTTIVS…IAGSALDMLA (71 aa)). The head domain (RuvB-H) stretch occupies residues 260–331 (RRGLDHLDRR…LTQMAIDQMV (72 aa)). DNA-binding residues include R296, R315, and R320.

Belongs to the RuvB family. In terms of assembly, homohexamer. Forms an RuvA(8)-RuvB(12)-Holliday junction (HJ) complex. HJ DNA is sandwiched between 2 RuvA tetramers; dsDNA enters through RuvA and exits via RuvB. An RuvB hexamer assembles on each DNA strand where it exits the tetramer. Each RuvB hexamer is contacted by two RuvA subunits (via domain III) on 2 adjacent RuvB subunits; this complex drives branch migration. In the full resolvosome a probable DNA-RuvA(4)-RuvB(12)-RuvC(2) complex forms which resolves the HJ.

It localises to the cytoplasm. The enzyme catalyses ATP + H2O = ADP + phosphate + H(+). Its function is as follows. The RuvA-RuvB-RuvC complex processes Holliday junction (HJ) DNA during genetic recombination and DNA repair, while the RuvA-RuvB complex plays an important role in the rescue of blocked DNA replication forks via replication fork reversal (RFR). RuvA specifically binds to HJ cruciform DNA, conferring on it an open structure. The RuvB hexamer acts as an ATP-dependent pump, pulling dsDNA into and through the RuvAB complex. RuvB forms 2 homohexamers on either side of HJ DNA bound by 1 or 2 RuvA tetramers; 4 subunits per hexamer contact DNA at a time. Coordinated motions by a converter formed by DNA-disengaged RuvB subunits stimulates ATP hydrolysis and nucleotide exchange. Immobilization of the converter enables RuvB to convert the ATP-contained energy into a lever motion, pulling 2 nucleotides of DNA out of the RuvA tetramer per ATP hydrolyzed, thus driving DNA branch migration. The RuvB motors rotate together with the DNA substrate, which together with the progressing nucleotide cycle form the mechanistic basis for DNA recombination by continuous HJ branch migration. Branch migration allows RuvC to scan DNA until it finds its consensus sequence, where it cleaves and resolves cruciform DNA. The sequence is that of Holliday junction branch migration complex subunit RuvB from Psychrobacter arcticus (strain DSM 17307 / VKM B-2377 / 273-4).